Reading from the N-terminus, the 424-residue chain is CinA-like protein (424 aa).

It belongs to the CinA family.

This Shewanella denitrificans (strain OS217 / ATCC BAA-1090 / DSM 15013) protein is CinA-like protein.